A 182-amino-acid polypeptide reads, in one-letter code: Lipid A acyltransferase PagP (182 aa).

Positions 1-21 (MTQYFRALAFFLLLVPATAMA) are cleaved as a signal peptide. C22 carries N-palmitoyl cysteine lipidation. C22 is lipidated: S-diacylglycerol cysteine. Active-site residues include H55, D98, and S99.

The protein belongs to the lipid A palmitoyltransferase family. As to quaternary structure, homodimer.

The protein localises to the cell outer membrane. The catalysed reaction is a lipid A + a 1,2-diacyl-sn-glycero-3-phosphocholine = a hepta-acyl lipid A + a 2-acyl-sn-glycero-3-phosphocholine. It carries out the reaction a lipid IVA + a 1,2-diacyl-sn-glycero-3-phosphocholine = a lipid IVB + a 2-acyl-sn-glycero-3-phosphocholine. The enzyme catalyses a lipid IIA + a 1,2-diacyl-sn-glycero-3-phosphocholine = a lipid IIB + a 2-acyl-sn-glycero-3-phosphocholine. Its function is as follows. Transfers a fatty acid residue from the sn-1 position of a phospholipid to the N-linked hydroxyfatty acid chain on the proximal unit of lipid A or its precursors. The polypeptide is Lipid A acyltransferase PagP (Bordetella parapertussis (strain 12822 / ATCC BAA-587 / NCTC 13253)).